Here is a 231-residue protein sequence, read N- to C-terminus: Uridylate kinase (231 aa).

Lysine 6–glycine 9 is a binding site for ATP. The involved in allosteric activation by GTP stretch occupies residues glycine 14–glycine 19. Positions 49 and 53 each coordinate ATP. UMP-binding positions include aspartate 66 and threonine 127–threonine 134. Residues threonine 154, tyrosine 160, and aspartate 163 each coordinate ATP.

Belongs to the UMP kinase family. Homohexamer.

The protein localises to the cytoplasm. It catalyses the reaction UMP + ATP = UDP + ADP. It functions in the pathway pyrimidine metabolism; CTP biosynthesis via de novo pathway; UDP from UMP (UMPK route): step 1/1. Allosterically activated by GTP. Inhibited by UTP. Catalyzes the reversible phosphorylation of UMP to UDP. The sequence is that of Uridylate kinase from Thermotoga petrophila (strain ATCC BAA-488 / DSM 13995 / JCM 10881 / RKU-1).